The sequence spans 1101 residues: Leucine-rich repeat receptor-like serine/threonine-protein kinase At1g17230 (1101 aa).

Residues 1–23 (MRGRICFLAIVILCSFSFILVRS) form the signal peptide. Residues 24–734 (LNEEGRVLLE…WLINGSQRQK (711 aa)) are Extracellular-facing. N-linked (GlcNAc...) asparagine glycans are attached at residues Asn-39, Asn-57, Asn-78, and Asn-97. 26 LRR repeats span residues 66-90 (LRTVTSVDLNGMNLSGTLSPLICKL), 91-115 (HGLRKLNVSTNFISGPIPQDLSLCR), 117-137 (LEVLDLCTNRFHGVIPIQLTM), 138-162 (IITLKKLYLCENYLFGSIPRQIGNL), 163-186 (SSLQELVIYSNNLTGVIPPSMAKL), 188-210 (QLRIIRAGRNGFSGVIPSEISGC), 211-234 (ESLKVLGLAENLLEGSLPKQLEKL), 235-258 (QNLTDLILWQNRLSGEIPPSVGNI), 260-282 (RLEVLALHENYFTGSIPREIGKL), 283-306 (TKMKRLYLYTNQLTGEIPREIGNL), 308-329 (DAAEIDFSENQLTGFIPKEFGH), 330-354 (ILNLKLLHLFENILLGPIPRELGEL), 355-379 (TLLEKLDLSINRLNGTIPQELQFLP), 381-402 (LVDLQLFDNQLEGKIPPLIGFY), 403-426 (SNFSVLDMSANSLSGPIPAHFCRF), 427-450 (QTLILLSLGSNKLSGNIPRDLKTC), 451-474 (KSLTKLMLGDNQLTGSLPIELFNL), 476-498 (NLTALELHQNWLSGNISADLGKL), 499-522 (KNLERLRLANNNFTGEIPPEIGNL), 524-546 (KIVGFNISSNQLTGHIPKELGSC), 548-569 (TIQRLDLSGNKFSGYIAQELGQ), 570-593 (LVYLEILRLSDNRLTGEIPHSFGD), 595-618 (TRLMELQLGGNLLSENIPVELGKL), 619-643 (TSLQISLNISHNNLSGTIPDSLGNL), 644-667 (QMLEILYLNDNKLSGEIPASIGNL), and 669-692 (SLLICNISNNNLVGTVPDTAVFQR). N-linked (GlcNAc...) asparagine glycans are attached at residues Asn-161 and Asn-174. N-linked (GlcNAc...) asparagine glycosylation is found at Asn-236 and Asn-257. A glycan (N-linked (GlcNAc...) asparagine) is linked at Asn-368. The N-linked (GlcNAc...) asparagine glycan is linked to Asn-404. Residues Asn-476, Asn-490, Asn-510, Asn-521, and Asn-529 are each glycosylated (N-linked (GlcNAc...) asparagine). N-linked (GlcNAc...) asparagine glycans are attached at residues Asn-626 and Asn-631. Residues Asn-674 and Asn-728 are each glycosylated (N-linked (GlcNAc...) asparagine). The chain crosses the membrane as a helical span at residues 735 to 755 (ILTITCIVIGSVFLITFLGLC). The Cytoplasmic portion of the chain corresponds to 756–1101 (WTIKRREPAF…LEEANSSKEI (346 aa)). Thr-788 and Thr-796 each carry phosphothreonine. The 283-residue stretch at 799–1081 (FSEDVVLGRG…ITEARGSSSL (283 aa)) folds into the Protein kinase domain. Residues 805 to 813 (LGRGACGTV) and Lys-827 each bind ATP. 2 positions are modified to phosphotyrosine: Tyr-874 and Tyr-913. Asp-926 (proton acceptor) is an active-site residue. Ser-960 is modified (phosphoserine). Phosphotyrosine occurs at positions 968 and 975. Residue Thr-976 is modified to Phosphothreonine. The disordered stretch occupies residues 1076–1101 (RGSSSLSSSSITSETPLEEANSSKEI). Positions 1078–1088 (SSSLSSSSITS) are enriched in low complexity.

The protein belongs to the protein kinase superfamily. Ser/Thr protein kinase family.

The protein resides in the cell membrane. It carries out the reaction L-seryl-[protein] + ATP = O-phospho-L-seryl-[protein] + ADP + H(+). The enzyme catalyses L-threonyl-[protein] + ATP = O-phospho-L-threonyl-[protein] + ADP + H(+). This is Leucine-rich repeat receptor-like serine/threonine-protein kinase At1g17230 from Arabidopsis thaliana (Mouse-ear cress).